The following is a 326-amino-acid chain: Vitamin B12 import system permease protein BtuC (326 aa).

The next 9 helical transmembrane spans lie at 15–35 (WLLC…CAGE), 61–81 (LAVL…QALF), 88–108 (PGLL…VLLG), 112–132 (LPNW…TLIL), 146–166 (LLAG…AIYF), 184–204 (GGVD…LLWI), 240–260 (GWMV…GLVI), 274–294 (VLLP…DVVA), and 302–322 (ELPI…WLLL).

It belongs to the binding-protein-dependent transport system permease family. FecCD subfamily. The complex is composed of two ATP-binding proteins (BtuD), two transmembrane proteins (BtuC) and a solute-binding protein (BtuF).

It is found in the cell inner membrane. Part of the ABC transporter complex BtuCDF involved in vitamin B12 import. Involved in the translocation of the substrate across the membrane. The polypeptide is Vitamin B12 import system permease protein BtuC (Escherichia coli (strain SE11)).